The sequence spans 294 residues: dTDP-4-dehydrorhamnose reductase (294 aa).

Residues 11 to 13 (GQL), 38 to 39 (DI), and 62 to 64 (AYT) each bind NADH. NADPH contacts are provided by residues 12–13 (QL), 38–39 (DI), and 62–64 (AYT). A dTDP-beta-L-rhamnose-binding site is contributed by 103–104 (TD). Tyrosine 127 and lysine 131 together coordinate NADH. The NADPH site is built by tyrosine 127 and lysine 131. Tyrosine 127 (proton donor/acceptor) is an active-site residue. Tryptophan 152 contacts dTDP-beta-L-rhamnose.

It belongs to the dTDP-4-dehydrorhamnose reductase family. In terms of assembly, homodimer. Mg(2+) serves as cofactor.

The enzyme catalyses dTDP-beta-L-rhamnose + NADP(+) = dTDP-4-dehydro-beta-L-rhamnose + NADPH + H(+). The protein operates within carbohydrate biosynthesis; dTDP-L-rhamnose biosynthesis. It functions in the pathway bacterial outer membrane biogenesis; LPS O-antigen biosynthesis. Functionally, involved in the biosynthesis of the dTDP-L-rhamnose which is an important component of lipopolysaccharide (LPS). Catalyzes the reduction of dTDP-6-deoxy-L-lyxo-4-hexulose to yield dTDP-L-rhamnose. This Aggregatibacter actinomycetemcomitans (Actinobacillus actinomycetemcomitans) protein is dTDP-4-dehydrorhamnose reductase.